We begin with the raw amino-acid sequence, 899 residues long: Lipoxygenase 2, chloroplastic (899 aa).

Residues 1–57 (MLKPQIHKPHLVNKLPLGTPFIPSHASIASFSTTSLRTLSVQKCYRRYIRYTSSNIK) constitute a chloroplast transit peptide. The 121-residue stretch at 83–203 (ALTAVTVGLL…DNPDKRIFFL (121 aa)) folds into the PLAT domain. In terms of domain architecture, Lipoxygenase spans 206–899 (SYLPSETPEG…GKGVPYSISI (694 aa)). Positions 252 to 286 (DPDTDSDMARPVLGGNEHPFPRRCRTGRKMTSTEP) are disordered. Residues H557, H562, H749, N753, and I899 each contribute to the Fe cation site.

The protein belongs to the lipoxygenase family. Requires Fe cation as cofactor. Confined to glandular trichomes in flowers.

The protein localises to the plastid. It localises to the chloroplast. It functions in the pathway lipid metabolism; oxylipin biosynthesis. Its function is as follows. Plant lipoxygenases may be involved in a number of diverse aspects of plant physiology including growth and development, pest resistance, and senescence or responses to wounding. Catalyzes the hydroperoxidation of lipids containing a cis,cis-1,4-pentadiene structure. The protein is Lipoxygenase 2, chloroplastic of Tanacetum cinerariifolium (Dalmatian daisy).